The chain runs to 241 residues: Carboxy-S-adenosyl-L-methionine synthase (241 aa).

S-adenosyl-L-methionine-binding positions include tyrosine 38, 63 to 65, 88 to 89, 116 to 117, asparagine 131, and arginine 198; these read GCS, DN, and DI.

It belongs to the class I-like SAM-binding methyltransferase superfamily. Cx-SAM synthase family. As to quaternary structure, homodimer.

The enzyme catalyses prephenate + S-adenosyl-L-methionine = carboxy-S-adenosyl-L-methionine + 3-phenylpyruvate + H2O. Functionally, catalyzes the conversion of S-adenosyl-L-methionine (SAM) to carboxy-S-adenosyl-L-methionine (Cx-SAM). The protein is Carboxy-S-adenosyl-L-methionine synthase of Haemophilus influenzae (strain PittEE).